Consider the following 490-residue polypeptide: Thiamine biosynthesis bifunctional protein ThiED (490 aa).

Residues methionine 1 to isoleucine 213 are thiamine-phosphate synthase. 4-amino-2-methyl-5-(diphosphooxymethyl)pyrimidine contacts are provided by residues glutamine 50–lysine 54 and asparagine 82. The Mg(2+) site is built by aspartate 83 and aspartate 102. Serine 121 lines the 4-amino-2-methyl-5-(diphosphooxymethyl)pyrimidine pocket. Serine 147–serine 149 serves as a coordination point for 2-[(2R,5Z)-2-carboxy-4-methylthiazol-5(2H)-ylidene]ethyl phosphate. Lysine 150 contacts 4-amino-2-methyl-5-(diphosphooxymethyl)pyrimidine. 2-[(2R,5Z)-2-carboxy-4-methylthiazol-5(2H)-ylidene]ethyl phosphate is bound by residues glycine 177 and isoleucine 197–serine 198. The hydroxymethylpyrimidine/phosphomethylpyrimidine kinase stretch occupies residues leucine 229–arginine 490. Glutamine 266 is a binding site for 4-amino-5-hydroxymethyl-2-methylpyrimidine.

In the N-terminal section; belongs to the thiamine-phosphate synthase family. The protein in the C-terminal section; belongs to the ThiD family. It depends on Mg(2+) as a cofactor.

The enzyme catalyses 2-[(2R,5Z)-2-carboxy-4-methylthiazol-5(2H)-ylidene]ethyl phosphate + 4-amino-2-methyl-5-(diphosphooxymethyl)pyrimidine + 2 H(+) = thiamine phosphate + CO2 + diphosphate. It carries out the reaction 2-(2-carboxy-4-methylthiazol-5-yl)ethyl phosphate + 4-amino-2-methyl-5-(diphosphooxymethyl)pyrimidine + 2 H(+) = thiamine phosphate + CO2 + diphosphate. The catalysed reaction is 4-methyl-5-(2-phosphooxyethyl)-thiazole + 4-amino-2-methyl-5-(diphosphooxymethyl)pyrimidine + H(+) = thiamine phosphate + diphosphate. It catalyses the reaction 4-amino-5-hydroxymethyl-2-methylpyrimidine + ATP = 4-amino-2-methyl-5-(phosphooxymethyl)pyrimidine + ADP + H(+). The enzyme catalyses 4-amino-2-methyl-5-(phosphooxymethyl)pyrimidine + ATP = 4-amino-2-methyl-5-(diphosphooxymethyl)pyrimidine + ADP. Its pathway is cofactor biosynthesis; thiamine diphosphate biosynthesis; 4-amino-2-methyl-5-diphosphomethylpyrimidine from 5-amino-1-(5-phospho-D-ribosyl)imidazole: step 3/3. It participates in cofactor biosynthesis; thiamine diphosphate biosynthesis; thiamine phosphate from 4-amino-2-methyl-5-diphosphomethylpyrimidine and 4-methyl-5-(2-phosphoethyl)-thiazole: step 1/1. Functionally, condenses 4-methyl-5-(beta-hydroxyethyl)thiazole monophosphate (THZ-P) and 2-methyl-4-amino-5-hydroxymethyl pyrimidine pyrophosphate (HMP-PP) to form thiamine monophosphate (TMP). In terms of biological role, catalyzes the phosphorylation of hydroxymethylpyrimidine phosphate (HMP-P) to HMP-PP, and of HMP to HMP-P. The polypeptide is Thiamine biosynthesis bifunctional protein ThiED (thiDE) (Geobacter sulfurreducens (strain ATCC 51573 / DSM 12127 / PCA)).